The primary structure comprises 141 residues: Ribosome maturation factor RimP (141 aa).

Belongs to the RimP family.

It localises to the cytoplasm. Its function is as follows. Required for maturation of 30S ribosomal subunits. The sequence is that of Ribosome maturation factor RimP from Laribacter hongkongensis (strain HLHK9).